The chain runs to 299 residues: MLYQQIAKNKRRTILVMAGFVFLVALIGAAVGYLFAGTATGGVIIALVIAVIYVSIMVGQSTDVVMSMNNAREIHSADEAPELWHIVEDMALVARVPMPRVFIIDDPSPNAFATGNNPQHAAVAATTGLLAIMNREELESVMAHEMTHVRNYDIRLQTIALALTAAISLLVNFAGNFMWFGASSRRDDREEGAGGVFAIIGSILLIILAPLAATMVQMALSRQREYQADAGAVELTRNPQGMISALRQLQHAEPMQNVDPASAALYISDPQENARHKSLSGLFDTHPPLEARIERLEKM.

Helical transmembrane passes span 14–34 (ILVM…VGYL) and 39–59 (ATGG…IMVG). His-144 contributes to the Zn(2+) binding site. Glu-145 is an active-site residue. Residue His-148 coordinates Zn(2+). Helical transmembrane passes span 159–179 (IALA…NFMW) and 196–216 (VFAI…ATMV). Glu-225 lines the Zn(2+) pocket.

The protein belongs to the peptidase M48B family. Zn(2+) is required as a cofactor.

It is found in the cell membrane. This Limosilactobacillus fermentum (strain NBRC 3956 / LMG 18251) (Lactobacillus fermentum) protein is Protease HtpX homolog.